The primary structure comprises 309 residues: HPr kinase/phosphorylase (309 aa).

Residues His-138 and Lys-159 contribute to the active site. 153 to 160 (GDSGIGKS) provides a ligand contact to ATP. Position 160 (Ser-160) interacts with Mg(2+). The Proton acceptor; for phosphorylation activity. Proton donor; for dephosphorylation activity role is filled by Asp-177. The segment at 201–210 (LEIRGVGIID) is important for the catalytic mechanism of both phosphorylation and dephosphorylation. Glu-202 contacts Mg(2+). Residue Arg-243 is part of the active site. Residues 264–269 (PVKTGR) form an important for the catalytic mechanism of dephosphorylation region.

It belongs to the HPrK/P family. Homohexamer. Requires Mg(2+) as cofactor.

It carries out the reaction [HPr protein]-L-serine + ATP = [HPr protein]-O-phospho-L-serine + ADP + H(+). It catalyses the reaction [HPr protein]-O-phospho-L-serine + phosphate + H(+) = [HPr protein]-L-serine + diphosphate. Its function is as follows. Catalyzes the ATP- as well as the pyrophosphate-dependent phosphorylation of a specific serine residue in HPr, a phosphocarrier protein of the phosphoenolpyruvate-dependent sugar phosphotransferase system (PTS). HprK/P also catalyzes the pyrophosphate-producing, inorganic phosphate-dependent dephosphorylation (phosphorolysis) of seryl-phosphorylated HPr (P-Ser-HPr). The two antagonistic activities of HprK/P are regulated by several intracellular metabolites, which change their concentration in response to the absence or presence of rapidly metabolisable carbon sources (glucose, fructose, etc.) in the growth medium. Therefore, by controlling the phosphorylation state of HPr, HPrK/P is a sensor enzyme that plays a major role in the regulation of carbon metabolism and sugar transport: it mediates carbon catabolite repression (CCR), and regulates PTS-catalyzed carbohydrate uptake and inducer exclusion. This chain is HPr kinase/phosphorylase, found in Streptococcus thermophilus (strain CNRZ 1066).